Consider the following 389-residue polypeptide: Indole-3-acetate monooxygenase (389 aa).

The protein belongs to the HpaH/HsaA monooxygenase family.

The enzyme catalyses (indol-3-yl)acetate + NADH + O2 + H(+) = 2-hydroxy-(1H-indol-3-yl)acetate + NAD(+) + H2O. The catalysed reaction is indole + NADH + O2 + H(+) = indoxyl + NAD(+) + H2O. Its function is as follows. Involved in the degradation of the plant hormone indole-3-acetic acid (IAA). Catalyzes the first step of the pathway, the conversion of IAA to 2-hydroxy-IAA (2-OH-IAA). Can also convert indole to indoxyl, which spontaneously dimerizes in the presence of oxygen to form the blue pigment indigo. This chain is Indole-3-acetate monooxygenase, found in Acinetobacter baumannii (strain ATCC 19606 / DSM 30007 / JCM 6841 / CCUG 19606 / CIP 70.34 / NBRC 109757 / NCIMB 12457 / NCTC 12156 / 81).